A 331-amino-acid chain; its full sequence is D-lactate/D-glycerate dehydrogenase (331 aa).

NAD(+)-binding positions include 154–155, D174, 205–206, N211, 232–234, and D258; these read RI, VP, and FAR. Residue R234 is part of the active site. E263 is an active-site residue. The Proton donor role is filled by H295.

This sequence belongs to the D-isomer specific 2-hydroxyacid dehydrogenase family. As to quaternary structure, homodimer.

The catalysed reaction is (R)-lactate + NAD(+) = pyruvate + NADH + H(+). The enzyme catalyses (R)-glycerate + NAD(+) = 3-hydroxypyruvate + NADH + H(+). Functionally, has both D-lactate and D-glycerate dehydrogenase activities. Equally active on pyruvate and hydroxypyruvate. The chain is D-lactate/D-glycerate dehydrogenase from Pediococcus acidilactici.